The sequence spans 526 residues: Lysine--tRNA ligase (526 aa).

Residues Glu431 and Glu438 each coordinate Mg(2+).

It belongs to the class-II aminoacyl-tRNA synthetase family. As to quaternary structure, homodimer. The cofactor is Mg(2+).

The protein localises to the cytoplasm. It carries out the reaction tRNA(Lys) + L-lysine + ATP = L-lysyl-tRNA(Lys) + AMP + diphosphate. The protein is Lysine--tRNA ligase of Chlamydia trachomatis serovar L2b (strain UCH-1/proctitis).